Here is a 532-residue protein sequence, read N- to C-terminus: Phosphoribosylamine--glycine ligase, chloroplastic (532 aa).

The transit peptide at 1–75 (MSSLCASNCY…IQRRLFLLRC (75 aa)) directs the protein to the chloroplast. In terms of domain architecture, ATP-grasp spans 204–412 (KNLCHKYNIP…LAKVLLAACK (209 aa)).

It belongs to the GARS family.

The protein resides in the plastid. It localises to the chloroplast. It catalyses the reaction 5-phospho-beta-D-ribosylamine + glycine + ATP = N(1)-(5-phospho-beta-D-ribosyl)glycinamide + ADP + phosphate + H(+). It participates in purine metabolism; IMP biosynthesis via de novo pathway; N(1)-(5-phospho-D-ribosyl)glycinamide from 5-phospho-alpha-D-ribose 1-diphosphate: step 2/2. The sequence is that of Phosphoribosylamine--glycine ligase, chloroplastic (PUR2) from Arabidopsis thaliana (Mouse-ear cress).